Reading from the N-terminus, the 292-residue chain is High-affinity heme uptake system protein IsdE (292 aa).

The first 19 residues, 1–19 (MRIIKYLTILVISVVILTS), serve as a signal peptide directing secretion. A lipid anchor (N-palmitoyl cysteine) is attached at cysteine 20. A lipid anchor (S-diacylglycerol cysteine) is attached at cysteine 20. A Fe/B12 periplasmic-binding domain is found at 35 to 291 (RIVPTTVALT…QLYDLFYKDK (257 aa)). Heme contacts are provided by valine 41, alanine 42, serine 60, tyrosine 61, methionine 78, and histidine 229.

It belongs to the bacterial solute-binding protein 8 family. Heme b serves as cofactor.

The protein resides in the cell membrane. Involved in heme (porphyrin) scavenging. Binds Fe(2+) and Fe(3+) heme but the largest fraction is Fe(2+) heme. Functions as a high-affinity heme binding protein and probably has a role in relaying heme-iron from cell wall-anchored isd proteins receptors to the probable permease IsdF. This chain is High-affinity heme uptake system protein IsdE (isdE), found in Staphylococcus aureus (strain bovine RF122 / ET3-1).